Consider the following 399-residue polypeptide: Lipase member K (399 aa).

A signal peptide spans 1 to 19; that stretch reads MWQLLAAACWMLLLGSMYG. The AB hydrolase-1 domain maps to 78–378; sequence PAVYLQHGLI…HYNHVDFYLG (301 aa). S172 acts as the Nucleophile in catalysis. C246 and C255 are oxidised to a cystine. Residues N271 and N327 are each glycosylated (N-linked (GlcNAc...) asparagine). Catalysis depends on charge relay system residues D343 and H372.

This sequence belongs to the AB hydrolase superfamily. Lipase family. As to expression, exclusively expressed in the epidermis within the granular keratinocytes.

The protein localises to the secreted. Plays a highly specific role in the last step of keratinocyte differentiation. May have an essential function in lipid metabolism of the most differentiated epidermal layers. The chain is Lipase member K (LIPK) from Homo sapiens (Human).